We begin with the raw amino-acid sequence, 363 residues long: Hydroxycarboxylic acid receptor 2 (363 aa).

Residues Met-1–Val-33 lie on the Extracellular side of the membrane. Residues Leu-34–Phe-54 traverse the membrane as a helical segment. Topologically, residues His-55–Arg-63 are cytoplasmic. Residues Ile-64 to Met-84 traverse the membrane as a helical segment. Residues Asp-85–Leu-102 are Extracellular-facing. Residues Cys-100 and Cys-177 are joined by a disulfide bond. Residues Met-103–Val-123 form a helical membrane-spanning segment. Residues Asp-124 to Arg-142 lie on the Cytoplasmic side of the membrane. Residues Thr-143–Leu-163 form a helical membrane-spanning segment. Residues Lys-164 to Met-192 are Extracellular-facing. The chain crosses the membrane as a helical span at residues Phe-193 to Trp-213. The Cytoplasmic segment spans residues Ser-214 to Ala-229. Residues Ile-230 to Val-250 form a helical membrane-spanning segment. The Extracellular segment spans residues Arg-251–Asp-273. Residues Leu-274–Tyr-294 traverse the membrane as a helical segment. Residues Tyr-295–Pro-363 lie on the Cytoplasmic side of the membrane. A disordered region spans residues Gly-319–Pro-363. Ser-328 bears the Phosphoserine mark.

It belongs to the G-protein coupled receptor 1 family. In terms of tissue distribution, expression largely restricted to adipose tissue and spleen. Expressed on mature neutrophils but not on immature neutrophils or eosinophils.

It localises to the cell membrane. Its function is as follows. Acts as a high affinity receptor for both nicotinic acid (also known as niacin) and (D)-beta-hydroxybutyrate and mediates increased adiponectin secretion and decreased lipolysis through G(i)-protein-mediated inhibition of adenylyl cyclase. This pharmacological effect requires nicotinic acid doses that are much higher than those provided by a normal diet. Mediates nicotinic acid-induced apoptosis in mature neutrophils. Receptor activation by nicotinic acid results in reduced cAMP levels which may affect activity of cAMP-dependent protein kinase A and phosphorylation of target proteins, leading to neutrophil apoptosis. The rank order of potency for the displacement of nicotinic acid binding is 5-methyl pyrazole-3-carboxylic acid = pyridine-3-acetic acid &gt; acifran &gt; 5-methyl nicotinic acid = acipimox &gt;&gt; nicotinuric acid = nicotinamide. The chain is Hydroxycarboxylic acid receptor 2 (HCAR2) from Homo sapiens (Human).